Reading from the N-terminus, the 245-residue chain is UPF0246 protein Cgl1995/cg2186 (245 aa).

Belongs to the UPF0246 family.

The protein is UPF0246 protein Cgl1995/cg2186 of Corynebacterium glutamicum (strain ATCC 13032 / DSM 20300 / JCM 1318 / BCRC 11384 / CCUG 27702 / LMG 3730 / NBRC 12168 / NCIMB 10025 / NRRL B-2784 / 534).